A 418-amino-acid chain; its full sequence is Nickel and cobalt resistance protein CnrC (418 aa).

Positions 1–29 are cleaved as a signal peptide; the sequence is MKQVISSFLCRPRFVGSAIWLLPVALSHA.

This sequence belongs to the outer membrane factor (OMF) (TC 1.B.17) family.

Its function is as follows. The products of the genes cnrA, cnrB, and cnrC are likely to form a membrane-bound protein complex catalyzing an energy-dependent efflux of Ni(2+) and Co(2+). The mechanism of action of the CnrCBA complex may be that of a proton/cation antiporter. The polypeptide is Nickel and cobalt resistance protein CnrC (cnrC) (Cupriavidus metallidurans (strain ATCC 43123 / DSM 2839 / NBRC 102507 / CH34) (Ralstonia metallidurans)).